A 517-amino-acid chain; its full sequence is Cytochrome P450 CYP72A616 (517 aa).

Residues 5-25 (VLGALAALLAAAAAWVMRAAA) traverse the membrane as a helical segment. Residue C465 participates in heme binding.

It belongs to the cytochrome P450 family. As to expression, mainly expressed in leaves and, at low levels, in roots, fruits and stems.

The protein resides in the membrane. The protein operates within steroid metabolism; cholesterol metabolism. Involved in the biosynthesis of spiroketal steroid and saponin natural products from cholesterol such as diosgenin and analogs (e.g. furostanol and spirostanol), plant defense compounds used as main precursors for the industrial production of steroid hormones. During the 5,6-spiroketalization of cholesterol, may catalyze the 27-monohydroxylation of furostanol-type steroid to an intermediate product that undergoes a stereospecific formation of the terminal heterocycle to yield diosgenin. This Paris polyphylla (Daiswa polyphylla) protein is Cytochrome P450 CYP72A616.